The sequence spans 133 residues: Rodlin protein RdlB (133 aa).

An N-terminal signal peptide occupies residues 1-28; that stretch reads MIKKVVAYAAIAASVMGASAAAAPQAMA. Amyloid-forming regions lie at residues 45–57 and 59–70; these read QYFG…GNMS and QMALIQGSFNKP. Residues 45-70 form a required for amyloid formation region; that stretch reads QYFGNSMTTGNMSPQMALIQGSFNKP.

Belongs to the rodlin family.

Its subcellular location is the secreted. The protein resides in the cell wall. It is found in the spore wall. Functionally, forms part of the rodlet layer on the spore surface; despite their high similarity both RdlA and RdlB are required for rodlet formation. Plays a role in cell adhesion to polystyrene plates. Forms amyloid-like fibrils in vitro composed of stacked beta-sheets. The sequence is that of Rodlin protein RdlB from Streptomyces coelicolor (strain ATCC BAA-471 / A3(2) / M145).